The following is a 154-amino-acid chain: Deoxyuridine 5'-triphosphate nucleotidohydrolase (154 aa).

Residues Arg-64–Gly-66, Asn-77, Thr-81–Asp-83, and Lys-91 contribute to the substrate site.

It belongs to the dUTPase family. In terms of assembly, homotrimer. Requires Mg(2+) as cofactor.

It carries out the reaction dUTP + H2O = dUMP + diphosphate + H(+). Its pathway is pyrimidine metabolism; dUMP biosynthesis; dUMP from dCTP (dUTP route): step 2/2. Its function is as follows. This enzyme is involved in nucleotide metabolism: it produces dUMP, the immediate precursor of thymidine nucleotides and it decreases the intracellular concentration of dUTP so that uracil cannot be incorporated into DNA. This is Deoxyuridine 5'-triphosphate nucleotidohydrolase from Mycobacterium avium (strain 104).